The following is a 147-amino-acid chain: Deoxyuridine 5'-triphosphate nucleotidohydrolase (147 aa).

Substrate contacts are provided by residues 67-69 (RSG), Asn80, and 84-86 (TID).

The protein belongs to the dUTPase family. Mg(2+) is required as a cofactor.

The catalysed reaction is dUTP + H2O = dUMP + diphosphate + H(+). The protein operates within pyrimidine metabolism; dUMP biosynthesis; dUMP from dCTP (dUTP route): step 2/2. Its function is as follows. This enzyme is involved in nucleotide metabolism: it produces dUMP, the immediate precursor of thymidine nucleotides and it decreases the intracellular concentration of dUTP so that uracil cannot be incorporated into DNA. This chain is Deoxyuridine 5'-triphosphate nucleotidohydrolase, found in Anaeromyxobacter dehalogenans (strain 2CP-1 / ATCC BAA-258).